The primary structure comprises 227 residues: Cytochrome c oxidase subunit 2 (227 aa).

The Mitochondrial intermembrane portion of the chain corresponds to Met1–Ser14. Residues Pro15 to Met45 traverse the membrane as a helical segment. Residues Leu46–Gln59 are Mitochondrial matrix-facing. Residues Glu60–Met87 form a helical membrane-spanning segment. Residues Asp88–Leu227 lie on the Mitochondrial intermembrane side of the membrane. Cu cation is bound by residues His161, Cys196, Glu198, Cys200, His204, and Met207. Glu198 lines the Mg(2+) pocket. Tyr218 is subject to Phosphotyrosine.

This sequence belongs to the cytochrome c oxidase subunit 2 family. In terms of assembly, component of the cytochrome c oxidase (complex IV, CIV), a multisubunit enzyme composed of 14 subunits. The complex is composed of a catalytic core of 3 subunits MT-CO1, MT-CO2 and MT-CO3, encoded in the mitochondrial DNA, and 11 supernumerary subunits COX4I, COX5A, COX5B, COX6A, COX6B, COX6C, COX7A, COX7B, COX7C, COX8 and NDUFA4, which are encoded in the nuclear genome. The complex exists as a monomer or a dimer and forms supercomplexes (SCs) in the inner mitochondrial membrane with NADH-ubiquinone oxidoreductase (complex I, CI) and ubiquinol-cytochrome c oxidoreductase (cytochrome b-c1 complex, complex III, CIII), resulting in different assemblies (supercomplex SCI(1)III(2)IV(1) and megacomplex MCI(2)III(2)IV(2)). Found in a complex with TMEM177, COA6, COX18, COX20, SCO1 and SCO2. Interacts with TMEM177 in a COX20-dependent manner. Interacts with COX20. Interacts with COX16. Cu cation is required as a cofactor.

It localises to the mitochondrion inner membrane. It carries out the reaction 4 Fe(II)-[cytochrome c] + O2 + 8 H(+)(in) = 4 Fe(III)-[cytochrome c] + 2 H2O + 4 H(+)(out). Its function is as follows. Component of the cytochrome c oxidase, the last enzyme in the mitochondrial electron transport chain which drives oxidative phosphorylation. The respiratory chain contains 3 multisubunit complexes succinate dehydrogenase (complex II, CII), ubiquinol-cytochrome c oxidoreductase (cytochrome b-c1 complex, complex III, CIII) and cytochrome c oxidase (complex IV, CIV), that cooperate to transfer electrons derived from NADH and succinate to molecular oxygen, creating an electrochemical gradient over the inner membrane that drives transmembrane transport and the ATP synthase. Cytochrome c oxidase is the component of the respiratory chain that catalyzes the reduction of oxygen to water. Electrons originating from reduced cytochrome c in the intermembrane space (IMS) are transferred via the dinuclear copper A center (CU(A)) of subunit 2 and heme A of subunit 1 to the active site in subunit 1, a binuclear center (BNC) formed by heme A3 and copper B (CU(B)). The BNC reduces molecular oxygen to 2 water molecules using 4 electrons from cytochrome c in the IMS and 4 protons from the mitochondrial matrix. This is Cytochrome c oxidase subunit 2 (MT-CO2) from Ailuropoda melanoleuca (Giant panda).